The sequence spans 1888 residues: Eukaryotic translation initiation factor 4G (1888 aa).

Disordered stretches follow at residues 1–259 (MSFN…PTTP), 391–420 (FDNKQSNAYADTGTSGPRPPYNLPSQTQPL), 449–662 (PLPS…SLQH), 726–761 (VAHSSSPENPGLGNVKNLDLISDDNQDTSSKEKNSE), 838–903 (ADVS…DGEV), 961–1042 (AYKR…SGDR), 1083–1138 (TNVS…DPRL), 1331–1356 (GEREQEEANKVEEEGEVKQSEEEREE), 1462–1605 (KWQQ…PGDL), and 1639–1691 (RFAG…PSLP). Polar residues-rich tracts occupy residues 13–36 (GYTQYRKSGRSNNFNPQRGSSGTH) and 75–84 (VNSTDSSNAP). The segment covering 171–183 (DEQKRDQARHESF) has biased composition (basic and acidic residues). Residues 185–195 (PVPPMPIPLAP) are compositionally biased toward pro residues. Polar residues-rich tracts occupy residues 211-231 (NVGQQLQQKDTGIINQPNTGD), 244-259 (ASPNHPTNQTQKPTTP), 393-405 (NKQSNAYADTGTS), and 458-475 (NSQPHRFNYPVSQGSQNV). Over residues 497–506 (PNREHTRDTH) the composition is skewed to basic and acidic residues. Positions 586 to 596 (IKSSPVISKQF) are enriched in polar residues. The span at 603 to 630 (VSLESQDSSSVQSSLTASSEESELAVAH) shows a compositional bias: low complexity. Positions 631 to 645 (SEVRRENLLGSDLHK) are enriched in basic and acidic residues. Residues 840 to 850 (VSASVSSSSTV) are compositionally biased toward low complexity. Residues 869 to 885 (NMSSNEVLKNVVKSDQP) are compositionally biased toward polar residues. Over residues 963-983 (KRPEEKKETVAHSESIERTES) the composition is skewed to basic and acidic residues. Residues 1048–1093 (KKYSRDFLLKFAEQFLDLPHNFEVTSDIESLMSTHTNVSHHHDRDP) are EIF4E-binding. The span at 1109 to 1124 (RLDRRGSNLVDDDRWS) shows a compositional bias: basic and acidic residues. The 224-residue stretch at 1239-1462 (QRQLKAILNK…KDAIDLRKNK (224 aa)) folds into the MIF4G domain. 2 stretches are compositionally biased toward basic and acidic residues: residues 1467–1484 (RKVEGPKKIEEVHRDAAQ) and 1661–1674 (KDLRHSGRSFDRSR). Residues 1700-1824 (RLQQLSLTAI…SLREVADLIC (125 aa)) enclose the MI domain.

It belongs to the eukaryotic initiation factor 4G family. In terms of assembly, EIF4F is a multi-subunit complex, the composition of which varies with external and internal environmental conditions. It is composed of at least EIF4A, EIF4E and EIF4G. Interacts directly with eIF4E. In higher plants two isoforms of EIF4F have been identified, named isoform EIF4F and isoform EIF(iso)4F. Isoform EIF4F has subunits p220 and p26, whereas isoform EIF(iso)4F has subunits p82 and p28.

Component of the protein complex eIF4F, which is involved in the recognition of the mRNA cap, ATP-dependent unwinding of 5'-terminal secondary structure and recruitment of mRNA to the ribosome. This chain is Eukaryotic translation initiation factor 4G, found in Cucumis melo (Muskmelon).